The sequence spans 585 residues: Glutamate decarboxylase 2 (585 aa).

The tract at residues M1–G24 is disordered. Phosphoserine is present on residues S3, S6, S10, and S13. S-palmitoyl cysteine attachment occurs at residues C30 and C45. Q181–S183 contacts substrate. K396 carries the post-translational modification N6-(pyridoxal phosphate)lysine. R558 contacts substrate.

The protein belongs to the group II decarboxylase family. In terms of assembly, homodimer. Pyridoxal 5'-phosphate is required as a cofactor. In terms of processing, phosphorylated; which does not affect kinetic parameters or subcellular location. Post-translationally, palmitoylated; which is required for presynaptic clustering.

It localises to the cytoplasm. The protein localises to the cytosol. Its subcellular location is the cytoplasmic vesicle. It is found in the presynaptic cell membrane. The protein resides in the golgi apparatus membrane. It carries out the reaction L-glutamate + H(+) = 4-aminobutanoate + CO2. Functionally, catalyzes the production of GABA. This is Glutamate decarboxylase 2 (Gad2) from Mus musculus (Mouse).